The sequence spans 272 residues: Dioscorin DB3L (272 aa).

The first 25 residues, 1-25 (MSSSTLFHLFLLSSLLFSCLSNARP), serve as a signal peptide directing secretion. The region spanning 28 to 263 (DDFSYIEGSP…LKFRTIFFYP (236 aa)) is the Alpha-carbonic anhydrase domain. Cysteine 53 and cysteine 213 are disulfide-bonded.

This sequence belongs to the alpha-class carbonic anhydrase family. In terms of assembly, homodimer; disulfide-linked. In terms of processing, not glycosylated. In terms of tissue distribution, expressed in tuber (at protein level).

Loss of hemagglutinating activity by EDTA treatment. The activity is fully recovered by the addition of 5 mM Ca(2+) ions, but not with Mg(2+) and Mn 2(+). Hemagglutination activity is inhibited by maltose and its derivatives, with maltopentaose and maltohexaose being the best inhibitors followed by maltose and iso maltose. Not inhibited by glycoproteins. Its function is as follows. Maltose-binding lectin. No affinity is detected toward glucose. Has hemagglutinating activity against rabbit erythrocytes at 3.9 ug/ml. No carbonate dehydratase or trypsin inhibitor activity detected by measuring the hydrolysis of 4-nitrophenyl acetate or the inhibition of bovine trypsin-catalyzed hydrolysis of N-benzoyl-L-arginine ethyl ester, respectively. The protein is Dioscorin DB3L of Dioscorea polystachya (Chinese yam).